We begin with the raw amino-acid sequence, 140 residues long: MRHGIAHRKLNRTHSHRKAMLANMAASLIEHEQIVTTLPKAKELGPFVDKLITLAKRGDVHGRRQAMSKVRNEDQVKKLFDTLGGRYSERDGGYTRVLKAGFRHGDNAPMAVIELVDRDPSAKGAADRARLEEEGGMTEE.

A compositionally biased stretch (basic and acidic residues) spans 119-133 (DPSAKGAADRARLEE). The disordered stretch occupies residues 119–140 (DPSAKGAADRARLEEEGGMTEE).

This sequence belongs to the bacterial ribosomal protein bL17 family. As to quaternary structure, part of the 50S ribosomal subunit. Contacts protein L32.

This is Large ribosomal subunit protein bL17 from Maricaulis maris (strain MCS10) (Caulobacter maris).